A 106-amino-acid polypeptide reads, in one-letter code: Minor capsid protein VP2 (106 aa).

The protein belongs to the vesivirus VP2 protein family. Homooligomer. The portal-like structure consists in 12 copies of VP2. Interacts with capsid protein VP1.

It localises to the virion. The protein localises to the host cytoplasm. Its function is as follows. Minor structural protein that forms a portal-like structure at a unique three-fold axis of symmetry, following binding to the host receptor. The virion attaches to feline junctional adhesion molecule A (F11R). Once attached, the virion is endocytosed. Acidification of the endosome induces conformational change of capsid protein thereby injecting virus genomic RNA into host cytoplasm. The channel formed by VP2 may allow the delivery of the viral genome through the host endosomal membrane. The chain is Minor capsid protein VP2 from Feline calicivirus (strain CFI/68 FIV) (FCV).